Here is a 201-residue protein sequence, read N- to C-terminus: MKKIGLFGGTFDPIHNGHFHIARAFADEIGLDAVVFLPAGGPYHKDAASASAADRLAMVELATAEDARFAVSDCDIVRESATYTFDTVQIFRRQFPSAQLWWLMGSDSLLKLHTWKKWQLLVRETNIAVAMRQGDSLHQTPRELHAWLGNALQDGSVRILSAPMHNVSSTEIRRNLSAAGVSDGIPPAAARYIRKHGLYEK.

This sequence belongs to the NadD family.

The enzyme catalyses nicotinate beta-D-ribonucleotide + ATP + H(+) = deamido-NAD(+) + diphosphate. It participates in cofactor biosynthesis; NAD(+) biosynthesis; deamido-NAD(+) from nicotinate D-ribonucleotide: step 1/1. Catalyzes the reversible adenylation of nicotinate mononucleotide (NaMN) to nicotinic acid adenine dinucleotide (NaAD). This is Probable nicotinate-nucleotide adenylyltransferase from Neisseria gonorrhoeae (strain ATCC 700825 / FA 1090).